The primary structure comprises 141 residues: Galactose-6-phosphate isomerase subunit LacA (141 aa).

The protein belongs to the LacAB/RpiB family. Heteromultimeric protein consisting of LacA and LacB.

It catalyses the reaction aldehydo-D-galactose 6-phosphate = keto-D-tagatose 6-phosphate. Its pathway is carbohydrate metabolism; D-galactose 6-phosphate degradation; D-tagatose 6-phosphate from D-galactose 6-phosphate: step 1/1. The protein is Galactose-6-phosphate isomerase subunit LacA of Streptococcus pneumoniae (strain 70585).